Reading from the N-terminus, the 66-residue chain is UPF0337 protein SAG0619 (66 aa).

The tract at residues 1-22 (MSQEKLKSKLDQAKGGAKEGFG) is disordered.

Belongs to the UPF0337 (CsbD) family.

This Streptococcus agalactiae serotype V (strain ATCC BAA-611 / 2603 V/R) protein is UPF0337 protein SAG0619.